The chain runs to 283 residues: MAGRPLHAFEVVATRHLAPHMVRVVLGGSGFDTFVPSDFTDSYIKLVFVDDDVDVGRLPRPLTLDSFADLPTAKRPPVRTMTVRHVDAAAREIAVDIVLHGEHGVAGPWAAGAQRGQPIYLMGPGGAYAPDPAADWHLLAGDESAIPAIAAALEALPPDAIGRAFIEVAGPDDEIGLTAPDAVEVNWVYRGGRADLVPEDRAGDHAPLIEAVTTTAWLPGQVHVFIHGEAQAVMHNLRPYVRNERGVDAKWASSISGYWRRGRTEEMFRKWKKELAEAEAGTH.

One can recognise an FAD-binding FR-type domain in the interval 4-131 (RPLHAFEVVA…MGPGGAYAPD (128 aa)).

This is an uncharacterized protein from Mycobacterium bovis (strain ATCC BAA-935 / AF2122/97).